We begin with the raw amino-acid sequence, 234 residues long: Large ribosomal subunit protein uL1 (234 aa).

This sequence belongs to the universal ribosomal protein uL1 family. As to quaternary structure, part of the 50S ribosomal subunit.

Functionally, binds directly to 23S rRNA. The L1 stalk is quite mobile in the ribosome, and is involved in E site tRNA release. In terms of biological role, protein L1 is also a translational repressor protein, it controls the translation of the L11 operon by binding to its mRNA. In Serratia marcescens, this protein is Large ribosomal subunit protein uL1.